A 165-amino-acid polypeptide reads, in one-letter code: Large ribosomal subunit protein uL15 (165 aa).

Residues Met1–Gly30 are compositionally biased toward basic residues. Disordered stretches follow at residues Met1 to His39 and Ala137 to Ala165. Residues Ala150–Ala165 show a composition bias toward acidic residues.

The protein belongs to the universal ribosomal protein uL15 family. As to quaternary structure, part of the 50S ribosomal subunit.

Binds to the 23S rRNA. This chain is Large ribosomal subunit protein uL15, found in Halorubrum lacusprofundi (strain ATCC 49239 / DSM 5036 / JCM 8891 / ACAM 34).